A 160-amino-acid chain; its full sequence is Protein-export protein SecB (160 aa).

It belongs to the SecB family. In terms of assembly, homotetramer, a dimer of dimers. One homotetramer interacts with 1 SecA dimer.

The protein resides in the cytoplasm. In terms of biological role, one of the proteins required for the normal export of preproteins out of the cell cytoplasm. It is a molecular chaperone that binds to a subset of precursor proteins, maintaining them in a translocation-competent state. It also specifically binds to its receptor SecA. This Beijerinckia indica subsp. indica (strain ATCC 9039 / DSM 1715 / NCIMB 8712) protein is Protein-export protein SecB.